The following is a 227-amino-acid chain: ATP-dependent dethiobiotin synthetase BioD (227 aa).

13–18 is a binding site for ATP; the sequence is DIGKTY. A Mg(2+)-binding site is contributed by Thr17. Lys38 is a catalytic residue. Ser42 contacts substrate. ATP-binding positions include Asp55, 116–119, and 179–180; these read EGSG and NN. Asp55 and Glu116 together coordinate Mg(2+).

It belongs to the dethiobiotin synthetase family. Homodimer. Mg(2+) serves as cofactor.

It localises to the cytoplasm. It catalyses the reaction (7R,8S)-7,8-diammoniononanoate + CO2 + ATP = (4R,5S)-dethiobiotin + ADP + phosphate + 3 H(+). The protein operates within cofactor biosynthesis; biotin biosynthesis; biotin from 7,8-diaminononanoate: step 1/2. Catalyzes a mechanistically unusual reaction, the ATP-dependent insertion of CO2 between the N7 and N8 nitrogen atoms of 7,8-diaminopelargonic acid (DAPA, also called 7,8-diammoniononanoate) to form a ureido ring. This chain is ATP-dependent dethiobiotin synthetase BioD, found in Clostridium botulinum (strain Langeland / NCTC 10281 / Type F).